Here is a 277-residue protein sequence, read N- to C-terminus: MVTANSTVKVGNVTFSNSAPLALIAGPCQMETRDHAFEMAGHLKEMTDKLGIGLVYKSSFDKANRTSLKAARGIGLEKALEVFSDLKKEYGFPVLTDIHTEEQCAAVAPVVDVLQIPAFLCRQTDLLIAAARTGRVVNVKKGQFLAPWDMKNVLAKITESGNPNVLATERGVSFGYNTLVSDMRALPIMAGLGAPVIFDATHSVQQPGGQGGSTGGQREFVETLARAAVAVGVAGLFIETHEDPDNAPSDGPNMVPIDKMPALLEKLMAFDRIAKAL.

Belongs to the KdsA family.

The protein resides in the cytoplasm. The catalysed reaction is D-arabinose 5-phosphate + phosphoenolpyruvate + H2O = 3-deoxy-alpha-D-manno-2-octulosonate-8-phosphate + phosphate. The protein operates within carbohydrate biosynthesis; 3-deoxy-D-manno-octulosonate biosynthesis; 3-deoxy-D-manno-octulosonate from D-ribulose 5-phosphate: step 2/3. Its pathway is bacterial outer membrane biogenesis; lipopolysaccharide biosynthesis. The sequence is that of 2-dehydro-3-deoxyphosphooctonate aldolase from Brucella canis (strain ATCC 23365 / NCTC 10854 / RM-666).